The sequence spans 358 residues: Protein RecA (358 aa).

66–73 provides a ligand contact to ATP; it reads GPESSGKT.

Belongs to the RecA family.

It localises to the cytoplasm. Can catalyze the hydrolysis of ATP in the presence of single-stranded DNA, the ATP-dependent uptake of single-stranded DNA by duplex DNA, and the ATP-dependent hybridization of homologous single-stranded DNAs. It interacts with LexA causing its activation and leading to its autocatalytic cleavage. The chain is Protein RecA from Herpetosiphon aurantiacus (strain ATCC 23779 / DSM 785 / 114-95).